The sequence spans 472 residues: Poly(A) polymerase catalytic subunit (472 aa).

Residues D191 and D193 contribute to the active site.

Belongs to the poxviridae poly(A) polymerase catalytic subunit family. As to quaternary structure, heterodimer of a large (catalytic) subunit and a small (regulatory) subunit.

The catalysed reaction is RNA(n) + ATP = RNA(n)-3'-adenine ribonucleotide + diphosphate. In terms of biological role, polymerase that creates the 3'-poly(A) tail of mRNA's. The sequence is that of Poly(A) polymerase catalytic subunit (PAPL) from Capra hircus (Goat).